The chain runs to 25 residues: Caerin-1.10 (25 aa).

Leucine amide is present on Leu-25.

This sequence belongs to the frog skin active peptide (FSAP) family. Caerin subfamily. In terms of tissue distribution, expressed by the skin dorsal glands.

The protein localises to the secreted. Functionally, antibacterial peptide with wide spectrum of activity. The protein is Caerin-1.10 of Litoria rothii (Roth's tree frog).